Reading from the N-terminus, the 161-residue chain is MQENAMEAANWALTIFFYGLSWFIAVGSIMILWPVWEYLKKKAHEQKLKGEEIIVAQAMTEQKLTIDFLREEAAVKELERLKAESLEIKERNAVEIDGIDYQGLTTIELKAKAKELGITGISRRSKNQLIEDIKQALIEQAVETENVVLNDDAHAHAVASV.

This is an uncharacterized protein from Mycoplasma (Bacteriophage L2).